The chain runs to 159 residues: Ribosome maturation factor RimP (159 aa).

It belongs to the RimP family.

The protein resides in the cytoplasm. Its function is as follows. Required for maturation of 30S ribosomal subunits. The chain is Ribosome maturation factor RimP from Geobacter sulfurreducens (strain ATCC 51573 / DSM 12127 / PCA).